The chain runs to 108 residues: Cell cycle protein GpsB (108 aa).

Positions 32-69 (LDNVIKDYENFNAQIEALKAENEALKKAKYQARNTVSA) form a coiled coil.

Belongs to the GpsB family. In terms of assembly, forms polymers through the coiled coil domains. Interacts with PBP1, MreC and EzrA.

It localises to the cytoplasm. Divisome component that associates with the complex late in its assembly, after the Z-ring is formed, and is dependent on DivIC and PBP2B for its recruitment to the divisome. Together with EzrA, is a key component of the system that regulates PBP1 localization during cell cycle progression. Its main role could be the removal of PBP1 from the cell pole after pole maturation is completed. Also contributes to the recruitment of PBP1 to the division complex. Not essential for septum formation. The sequence is that of Cell cycle protein GpsB from Streptococcus pyogenes serotype M49 (strain NZ131).